A 138-amino-acid chain; its full sequence is Glutathione S-transferase Mu 5 (138 aa).

A Phosphoserine modification is found at Ser-1. Residues 1–71 (SMVLGYWDIR…KITQSNAILR (71 aa)) form the GST N-terminal domain. Residues 6-7 (YW), 39-43 (WLDVK), 52-53 (NL), and 65-66 (QS) contribute to the glutathione site. The 64-residue stretch at 72–135 (IRVDIMENQI…FMCRCFKMPI (64 aa)) folds into the GST C-terminal domain.

This sequence belongs to the GST superfamily. Mu family. As to quaternary structure, homodimer.

It localises to the cytoplasm. The enzyme catalyses RX + glutathione = an S-substituted glutathione + a halide anion + H(+). Conjugation of reduced glutathione to a wide number of exogenous and endogenous hydrophobic electrophiles. The protein is Glutathione S-transferase Mu 5 of Mesocricetus auratus (Golden hamster).